A 376-amino-acid chain; its full sequence is Mitogen-activated protein kinase ERK-A (376 aa).

One can recognise a Protein kinase domain in the interval 38–326; the sequence is YIKLAYIGEG…VEEALAHPYL (289 aa). Residues 44-52 and lysine 67 contribute to the ATP site; that span reads IGEGAYGMV. The active-site Proton acceptor is aspartate 162. Threonine 198 bears the Phosphothreonine mark. The TXY motif lies at 198 to 200; that stretch reads TEY. Tyrosine 200 is modified (phosphotyrosine).

The protein belongs to the protein kinase superfamily. CMGC Ser/Thr protein kinase family. MAP kinase subfamily. Mg(2+) is required as a cofactor. In terms of processing, dually phosphorylated on Thr-198 and Tyr-200, which activates the enzyme. Phosphorylated on tyrosine residue(s) in response to insulin. In third instar larvae, expressed in eye imaginal disks. In adults, expressed in head and body.

The protein resides in the cytoplasm. Its subcellular location is the nucleus. It carries out the reaction L-seryl-[protein] + ATP = O-phospho-L-seryl-[protein] + ADP + H(+). The enzyme catalyses L-threonyl-[protein] + ATP = O-phospho-L-threonyl-[protein] + ADP + H(+). Activated by tyrosine and threonine phosphorylation. In terms of biological role, serine/threonine kinase which acts as an essential component of the MAP kinase signal transduction pathway to regulate proliferation, differentiation and effect cell fate decisions in various tissues. Required downstream of phl/Raf in the sev/sevenless, tor/torso, and EGF receptor homolog Egfr signal transduction pathways. Required for embryonic epithelial tissue repair. During larval development, mediates Ptth/tor signaling leading to the production of ecdysone, a hormone required for the initiation of metamorphosis. The sequence is that of Mitogen-activated protein kinase ERK-A from Drosophila melanogaster (Fruit fly).